The chain runs to 89 residues: Signal recognition particle 19 kDa protein (89 aa).

The protein belongs to the SRP19 family. As to quaternary structure, part of the signal recognition particle protein translocation system, which is composed of SRP and FtsY. Archaeal SRP consists of a 7S RNA molecule of 300 nucleotides and two protein subunits: SRP54 and SRP19.

It is found in the cytoplasm. Its function is as follows. Involved in targeting and insertion of nascent membrane proteins into the cytoplasmic membrane. Binds directly to 7S RNA and mediates binding of the 54 kDa subunit of the SRP. This Methanococcus maripaludis (strain C5 / ATCC BAA-1333) protein is Signal recognition particle 19 kDa protein.